Consider the following 326-residue polypeptide: Tetraacyldisaccharide 4'-kinase (326 aa).

58–65 lines the ATP pocket; that stretch reads SVGGNGKT.

It belongs to the LpxK family.

It catalyses the reaction a lipid A disaccharide + ATP = a lipid IVA + ADP + H(+). Its pathway is glycolipid biosynthesis; lipid IV(A) biosynthesis; lipid IV(A) from (3R)-3-hydroxytetradecanoyl-[acyl-carrier-protein] and UDP-N-acetyl-alpha-D-glucosamine: step 6/6. Transfers the gamma-phosphate of ATP to the 4'-position of a tetraacyldisaccharide 1-phosphate intermediate (termed DS-1-P) to form tetraacyldisaccharide 1,4'-bis-phosphate (lipid IVA). This is Tetraacyldisaccharide 4'-kinase from Pseudoalteromonas translucida (strain TAC 125).